Reading from the N-terminus, the 116-residue chain is Large ribosomal subunit protein uL18 (116 aa).

Belongs to the universal ribosomal protein uL18 family. Part of the 50S ribosomal subunit; part of the 5S rRNA/L5/L18/L25 subcomplex. Contacts the 5S and 23S rRNAs.

In terms of biological role, this is one of the proteins that bind and probably mediate the attachment of the 5S RNA into the large ribosomal subunit, where it forms part of the central protuberance. The polypeptide is Large ribosomal subunit protein uL18 (Shewanella oneidensis (strain ATCC 700550 / JCM 31522 / CIP 106686 / LMG 19005 / NCIMB 14063 / MR-1)).